Consider the following 149-residue polypeptide: uncharacterized protein (149 aa).

This is an uncharacterized protein from Acidithiobacillus ferridurans.